The chain runs to 422 residues: Transcription initiation factor TFIID subunit 15b (422 aa).

Disordered stretches follow at residues 1 to 24 (MAGM…DGYG), 47 to 94 (YGGR…PNPS), 111 to 263 (ALAP…DAAT), and 368 to 422 (MAEK…SRPY). Gly residues-rich tracts occupy residues 8–24 (DGGG…DGYG) and 47–83 (YGGR…GGGG). The RanBP2-type zinc finger occupies 84–115 (RDGDWRCPNPSCGNVNFARRVECNKCGALAPS). The segment covering 123–133 (DRGGGGYSRGG) has biased composition (gly residues). Basic and acidic residues predominate over residues 134–156 (GDSDRGGGRGGRNDSGRSYESSR). 2 stretches are compositionally biased toward gly residues: residues 219–229 (PSYGGPRGGYG) and 236–247 (GGRGGRSGGYDG). The segment covering 252–263 (RRQEASYEDAAT) has biased composition (basic and acidic residues). The RRM domain maps to 280–371 (ARIYISNLPP…NKISVTMAEK (92 aa)). The segment covering 382–397 (RGGGRGGGGGGYGGGG) has biased composition (gly residues).

The protein belongs to the TAF15 family. As to quaternary structure, component of the TFIID complex. TFIID is composed of TATA binding protein (TBP) and a number of TBP-associated factors (TAFs) whose MWs range from 14-217 kDa. Interacts with TAF4, TAF4B, TAF5, TAF12B and TAF14. Expressed in roots, leaves and inflorescences.

It localises to the nucleus. Its function is as follows. TAFs are components of the transcription factor IID (TFIID) complex that is essential for mediating regulation of RNA polymerase transcription. The polypeptide is Transcription initiation factor TFIID subunit 15b (TAF15B) (Arabidopsis thaliana (Mouse-ear cress)).